A 260-amino-acid polypeptide reads, in one-letter code: Histidine-binding periplasmic protein (260 aa).

An N-terminal signal peptide occupies residues 1–22 (MKKLVLSLSLVLAFSSATAAFA). Residues Cys60 and Cys67 are joined by a disulfide bond. Ser91, Ser92, Ser94, Arg99, Thr143, and Asp183 together coordinate L-histidine.

Belongs to the bacterial solute-binding protein 3 family. The complex is composed of two ATP-binding proteins (HisP), two transmembrane proteins (HisM and HisQ) and a solute-binding protein (HisJ).

It is found in the periplasm. Part of the ABC transporter complex HisPMQJ involved in histidine transport. Binds histidine. Interacts with HisQMP and stimulates ATPase activity of HisP, which results in histidine translocation. The protein is Histidine-binding periplasmic protein (hisJ) of Escherichia coli O157:H7.